The primary structure comprises 429 residues: G2/mitotic-specific cyclin-B1 (429 aa).

Polar residues predominate over residues 1-14 (MALRVTRNTKLNTE). 2 disordered regions span residues 1–21 (MALR…KVSM) and 71–128 (TGKV…PMET). An N6-acetyllysine modification is found at lysine 73. Residues 92–106 (PEVELAEPEPEPEPV) show a composition bias toward acidic residues. Serine 122 carries the phosphoserine; by CDK1 modification. At serine 124 the chain carries Phosphoserine. At serine 129 the chain carries Phosphoserine; by PLK1. Serine 143 is modified (phosphoserine). 2 interaction with CDK2 regions span residues 165–173 (EYVKDIYAY) and 254–257 (YEEM). Threonine 317 carries the post-translational modification Phosphothreonine.

This sequence belongs to the cyclin family. Cyclin AB subfamily. As to quaternary structure, interacts with the CDC2 protein kinase to form a serine/threonine kinase holoenzyme complex also known as maturation promoting factor (MPF). The cyclin subunit imparts substrate specificity to the complex. Binds HEI10. Interacts with catalytically active RALBP1 and CDC2 during mitosis to form an endocytotic complex during interphase. Interacts with CCNF; interaction is required for nuclear localization. Interacts with CDK5RAP3. Interacts with RFPL4A and UBE2A. Interacts with INCA1. Ubiquitinated by the SCF(NIPA) complex during interphase, leading to its destruction. Not ubiquitinated during G2/M phases. In terms of processing, phosphorylated by PLK1 at Ser-129 on centrosomes during prophase: phosphorylation by PLK1 does not cause nuclear import. Phosphorylation at Ser-143 was also reported to be mediated by PLK1 but Ser-129 seems to be the primary phosphorylation site.

The protein localises to the cytoplasm. The protein resides in the nucleus. It is found in the cytoskeleton. Its subcellular location is the microtubule organizing center. It localises to the centrosome. Its function is as follows. Essential for the control of the cell cycle at the G2/M (mitosis) transition. The protein is G2/mitotic-specific cyclin-B1 (CCNB1) of Cricetulus griseus (Chinese hamster).